A 331-amino-acid chain; its full sequence is uncharacterized protein (331 aa).

The protein belongs to the ornithine cyclodeaminase/mu-crystallin family.

This is an uncharacterized protein from Sinorhizobium fredii (strain NBRC 101917 / NGR234).